Here is a 200-residue protein sequence, read N- to C-terminus: MAVRMSKVERQRLLKEKINTNPFYTDDELAEMFGVSVQTIRLDRMELGIPEVRERIKSVAEENYQKVRTITGTEVVGELIDLELGKRGISIFEPTEDMVFVKTKIVKGQYIYSQAESLAMSVIDASAALIGVANIKYKFPVKVGDRLVAKAEVIRQRGNKYFVWVKIKVKDKEVFRGKFILVAIDEDFLKKRSDTVEVSN.

Belongs to the FapR family.

Its function is as follows. Transcriptional factor involved in regulation of membrane lipid biosynthesis by repressing genes involved in fatty acid and phospholipid metabolism. The polypeptide is Transcription factor FapR (Thermoanaerobacter pseudethanolicus (strain ATCC 33223 / 39E) (Clostridium thermohydrosulfuricum)).